Consider the following 59-residue polypeptide: Large ribosomal subunit protein bL32 (59 aa).

Belongs to the bacterial ribosomal protein bL32 family.

This Mesoplasma florum (strain ATCC 33453 / NBRC 100688 / NCTC 11704 / L1) (Acholeplasma florum) protein is Large ribosomal subunit protein bL32.